Consider the following 61-residue polypeptide: Photosystem II reaction center protein K (61 aa).

A propeptide spanning residues 1–24 (MPNILSLTCICFNSVLCPTSFFFA) is cleaved from the precursor. Residues 32-52 (IFNPIVDVMPVIPVLFFLLAF) traverse the membrane as a helical segment.

The protein belongs to the PsbK family. PSII is composed of 1 copy each of membrane proteins PsbA, PsbB, PsbC, PsbD, PsbE, PsbF, PsbH, PsbI, PsbJ, PsbK, PsbL, PsbM, PsbT, PsbX, PsbY, PsbZ, Psb30/Ycf12, at least 3 peripheral proteins of the oxygen-evolving complex and a large number of cofactors. It forms dimeric complexes.

The protein localises to the plastid. Its subcellular location is the chloroplast thylakoid membrane. Functionally, one of the components of the core complex of photosystem II (PSII). PSII is a light-driven water:plastoquinone oxidoreductase that uses light energy to abstract electrons from H(2)O, generating O(2) and a proton gradient subsequently used for ATP formation. It consists of a core antenna complex that captures photons, and an electron transfer chain that converts photonic excitation into a charge separation. This is Photosystem II reaction center protein K from Sorghum bicolor (Sorghum).